Here is a 160-residue protein sequence, read N- to C-terminus: Large ribosomal subunit protein eL21 (160 aa).

It belongs to the eukaryotic ribosomal protein eL21 family.

The protein is Large ribosomal subunit protein eL21 (RPL21) of Encephalitozoon cuniculi (strain GB-M1) (Microsporidian parasite).